A 772-amino-acid chain; its full sequence is Ribosomal protein S6 kinase alpha-4 (772 aa).

The Protein kinase 1 domain occupies 33–301; it reads FELLKVLGTG…AQEVRNHPFF (269 aa). ATP is bound by residues 39–47 and Lys65; that span reads LGTGAYGKV. Asp161 serves as the catalytic Proton acceptor. Ser196 is modified (phosphoserine; by autocatalysis). The AGC-kinase C-terminal domain maps to 302 to 371; that stretch reads QGLDWVALAA…VAPSILFDHN (70 aa). The residue at position 343 (Ser343) is a Phosphoserine; by MAPK1, MAPK3 and MAPK14. Ser347 is subject to Phosphoserine. Phosphoserine; by autocatalysis occurs at positions 360 and 365. Positions 411-674 constitute a Protein kinase 2 domain; the sequence is DLREPALGQG…LEGLRGSSWL (264 aa). Residues 417–425 and Lys440 each bind ATP; that span reads LGQGSFSVC. Catalysis depends on Asp530, which acts as the Proton acceptor. Thr542 is modified (phosphothreonine). Residue Thr568 is modified to Phosphothreonine; by MAPK1, MAPK3 and MAPK14. Phosphoserine occurs at positions 634 and 678. 2 disordered regions span residues 673-696 and 728-772; these read WLQD…SSGP and AKRR…LPPS. Thr687 carries the post-translational modification Phosphothreonine. The tract at residues 725–772 is required for nuclear targeting and association with MAPK14; that stretch reads APLAKRRKQKLRSATASRRGSPAPANPGRAPVASKGAPRRANGPLPPS. A Phosphoserine; by autocatalysis modification is found at Ser737. A Phosphoserine modification is found at Ser745.

Belongs to the protein kinase superfamily. AGC Ser/Thr protein kinase family. S6 kinase subfamily. As to quaternary structure, forms a complex with either MAPK1/ERK2 or MAPK3/ERK1 in quiescent cells which transiently dissociates following mitogenic stimulation. Also associates with MAPK14/p38-alpha. Activated RPS6KA4 associates with and phosphorylates the NF-kappa-B p65 subunit RELA. Mg(2+) is required as a cofactor. Ser-343 and Thr-568 phosphorylation is required for kinase activity. Ser-343 and Ser-196 are autophosphorylated by the C-terminal kinase domain, and their phosphorylation is essential for the catalytic activity of the N-terminal kinase domain. Phosphorylated at Ser-343, Thr-568 and Thr-687 by MAPK1/ERK2, MAPK3/ERK1 and MAPK14/p38-alpha. Autophosphorylated at Ser-737 and Ser-745 by the N-terminal kinase domain.

It localises to the nucleus. It catalyses the reaction L-seryl-[protein] + ATP = O-phospho-L-seryl-[protein] + ADP + H(+). The enzyme catalyses L-threonyl-[protein] + ATP = O-phospho-L-threonyl-[protein] + ADP + H(+). Its activity is regulated as follows. Activated by phosphorylation at Ser-343, Thr-568 and Thr-687 by MAPK1/ERK2, MAPK3/ERK1 and MAPK14/p38-alpha, and by further autophosphorylation of Ser-196, Ser-360 and Ser-365 by the activated C-terminal kinase domain. In terms of biological role, serine/threonine-protein kinase that is required for the mitogen or stress-induced phosphorylation of the transcription factors CREB1 and ATF1 and for the regulation of the transcription factor RELA, and that contributes to gene activation by histone phosphorylation and functions in the regulation of inflammatory genes. Phosphorylates CREB1 and ATF1 in response to mitogenic or stress stimuli such as UV-C irradiation, epidermal growth factor (EGF) and anisomycin. Plays an essential role in the control of RELA transcriptional activity in response to TNF. Phosphorylates 'Ser-10' of histone H3 in response to mitogenics, stress stimuli and EGF, which results in the transcriptional activation of several immediate early genes, including proto-oncogenes c-fos/FOS and c-jun/JUN. May also phosphorylate 'Ser-28' of histone H3. Mediates the mitogen- and stress-induced phosphorylation of high mobility group protein 1 (HMGN1/HMG14). In lipopolysaccharide-stimulated primary macrophages, acts downstream of the Toll-like receptor TLR4 to limit the production of pro-inflammatory cytokines. Functions probably by inducing transcription of the MAP kinase phosphatase DUSP1 and the anti-inflammatory cytokine interleukin 10 (IL10), via CREB1 and ATF1 transcription factors. The sequence is that of Ribosomal protein S6 kinase alpha-4 (RPS6KA4) from Homo sapiens (Human).